The primary structure comprises 506 residues: Glucosidase 2 subunit beta (506 aa).

A signal peptide spans M1–A23. A disulfide bridge connects residues C86 and C108. Coiled coils occupy residues S172–T243 and E338–H374. In terms of domain architecture, MRH spans E279–P474. Disulfide bonds link C431–C460 and C445–C472. An ER retrieval sequence motif is present at residues V503–L506.

As to quaternary structure, heterodimer of a catalytic subunit alpha (gls2) and a subunit beta (gtb1).

It is found in the endoplasmic reticulum. In terms of biological role, subunit of glucosidase 2, which cleaves sequentially the 2 innermost alpha-1,3-linked glucose residues from the Glc(2)Man(9)GlcNAc(2) oligosaccharide precursor of immature glycoproteins in the endoplasmic reticulum (ER). Specifically required for the cleavage of the final glucose. The subunit beta retains the catalytic subunit alpha in the ER. This chain is Glucosidase 2 subunit beta (gtb1), found in Schizosaccharomyces pombe (strain 972 / ATCC 24843) (Fission yeast).